Reading from the N-terminus, the 65-residue chain is UPF0434 protein PSHAa1659 (65 aa).

It belongs to the UPF0434 family.

In Pseudoalteromonas translucida (strain TAC 125), this protein is UPF0434 protein PSHAa1659.